We begin with the raw amino-acid sequence, 418 residues long: 4-hydroxy-3-methylbut-2-en-1-yl diphosphate synthase (flavodoxin) (418 aa).

[4Fe-4S] cluster-binding residues include Cys-305, Cys-308, Cys-351, and Glu-358.

The protein belongs to the IspG family. The cofactor is [4Fe-4S] cluster.

The enzyme catalyses (2E)-4-hydroxy-3-methylbut-2-enyl diphosphate + oxidized [flavodoxin] + H2O + 2 H(+) = 2-C-methyl-D-erythritol 2,4-cyclic diphosphate + reduced [flavodoxin]. The protein operates within isoprenoid biosynthesis; isopentenyl diphosphate biosynthesis via DXP pathway; isopentenyl diphosphate from 1-deoxy-D-xylulose 5-phosphate: step 5/6. In terms of biological role, converts 2C-methyl-D-erythritol 2,4-cyclodiphosphate (ME-2,4cPP) into 1-hydroxy-2-methyl-2-(E)-butenyl 4-diphosphate. This is 4-hydroxy-3-methylbut-2-en-1-yl diphosphate synthase (flavodoxin) from Bartonella bacilliformis (strain ATCC 35685 / KC583 / Herrer 020/F12,63).